A 321-amino-acid chain; its full sequence is Oxidoreductase P35 (321 aa).

Belongs to the Gfo/Idh/MocA family.

The protein localises to the cell surface. Its function is as follows. Oxidoreductase that may be involved in ulvan degradation. Ulvan is the main polysaccharide component of the Ulvales (green seaweed) cell wall. It is composed of disaccharide building blocks comprising 3-sulfated rhamnose (Rha3S) linked to D-glucuronic acid (GlcA), L-iduronic acid (IduA), or D-xylose (Xyl). The polypeptide is Oxidoreductase P35 (Formosa agariphila (strain DSM 15362 / KCTC 12365 / LMG 23005 / KMM 3901 / M-2Alg 35-1)).